The following is a 498-amino-acid chain: Myotilin (498 aa).

Disordered stretches follow at residues 1-46 (MFNY…QPRQ), 64-151 (MSSS…HEIQ), and 202-241 (QDDS…NDQD). Omega-N-methylarginine is present on arginine 20. Positions 29–43 (SSFSSQTKQSSIIIQ) are enriched in low complexity. Residues 77-138 (AGSNPGQRVT…INAKPSQTAN (62 aa)) show a composition bias toward polar residues. Residues 79-150 (SNPGQRVTTT…PIPRTPDHEI (72 aa)) are necessary for interaction with ACTN1. Low complexity predominate over residues 202–212 (QDDSGAQDSQQ). The segment at 215–493 (SEHARLQVPT…QRLAAQSGLY (279 aa)) is necessary for interaction with FLNC. Residues 215-498 (SEHARLQVPT…QSGLYESEEL (284 aa)) form a necessary for interaction with ACTA1 region. Residues 222-235 (VPTSQVRSRSTSRG) are compositionally biased toward polar residues. 2 Ig-like C2-type domains span residues 250–335 (PRFI…ATFT) and 349–441 (PMFI…LDVT).

Belongs to the myotilin/palladin family. In terms of assembly, homodimer. Interacts with ACTA1, ACTN1, FLNA, FLNB, FLNC and MYOZ2. Interacts with the C-terminal region of MYOZ1. Expressed in skeletal muscle (at protein level). Expressed in skeletal muscle, heart, bone marrow and thyroid gland.

It is found in the cell membrane. The protein resides in the sarcolemma. The protein localises to the cytoplasm. Its subcellular location is the cytoskeleton. It localises to the myofibril. It is found in the sarcomere. The protein resides in the z line. Functionally, component of a complex of multiple actin cross-linking proteins. Involved in the control of myofibril assembly and stability at the Z lines in muscle cells. This chain is Myotilin (MYOT), found in Homo sapiens (Human).